Reading from the N-terminus, the 239-residue chain is MIAFTLLSLAAVLQQSFGNVDFNSESTRRQKKQKEIVDLHNSLRRSVSPTASNMLKMQWYPEAASNAERWASNCNLGHSPDYSRVLEGIECGENIYMSSNPRAWTEIIQLWHDEYKNFVYGVGANPPGSVTGHYTQIVWYKTYRIGCAVNYCPSSEYSYFYVCQYCPSGNMRGSTATPYKSGPTCGDCPSACDNGLCTNPCTLYNEYTNCDSLVKQSSCQDEWIKSKCPASCFCHNKII.

Residues 1 to 18 (MIAFTLLSLAAVLQQSFG) form the signal peptide. The SCP domain maps to 37–165 (VDLHNSLRRS…EYSYFYVCQY (129 aa)). 8 disulfide bridges follow: Cys-74–Cys-152, Cys-91–Cys-166, Cys-147–Cys-163, Cys-185–Cys-192, Cys-188–Cys-197, Cys-201–Cys-234, Cys-210–Cys-228, and Cys-219–Cys-232. Residues 201-234 (CTLYNEYTNCDSLVKQSSCQDEWIKSKCPASCFC) form the ShKT domain.

Expressed by the venom gland.

The protein localises to the secreted. Weakly blocks contraction of smooth muscle elicited by high potassium-induced depolarization, but does not block caffeine-stimulated contraction. May target voltage-gated calcium channels on smooth muscle. This chain is Cysteine-rich venom protein ophanin, found in Ophiophagus hannah (King cobra).